A 446-amino-acid chain; its full sequence is Histidine--tRNA ligase (446 aa).

Belongs to the class-II aminoacyl-tRNA synthetase family. As to quaternary structure, homodimer.

The protein localises to the cytoplasm. The enzyme catalyses tRNA(His) + L-histidine + ATP = L-histidyl-tRNA(His) + AMP + diphosphate + H(+). The chain is Histidine--tRNA ligase from Burkholderia pseudomallei (strain K96243).